Reading from the N-terminus, the 87-residue chain is MDKQEKSLIINEFKKSESDTGSTEVQVALLTARIHQLTTHMIANKHDFHTKRSLLTLVGRRRRLLSYMRNSNGAGYQELIANLGLRK.

Belongs to the universal ribosomal protein uS15 family. As to quaternary structure, part of the 30S ribosomal subunit. Forms a bridge to the 50S subunit in the 70S ribosome, contacting the 23S rRNA.

One of the primary rRNA binding proteins, it binds directly to 16S rRNA where it helps nucleate assembly of the platform of the 30S subunit by binding and bridging several RNA helices of the 16S rRNA. In terms of biological role, forms an intersubunit bridge (bridge B4) with the 23S rRNA of the 50S subunit in the ribosome. The chain is Small ribosomal subunit protein uS15 from Dehalococcoides mccartyi (strain ATCC BAA-2100 / JCM 16839 / KCTC 5957 / BAV1).